The sequence spans 927 residues: GPI inositol-deacylase (927 aa).

The Cytoplasmic segment spans residues 1–4 (MNPL). A helical transmembrane segment spans residues 5-25 (SAVFNSVVLVLLALGVTDVFF). Residues 26-595 (SYESSRCSMT…QIVRFHGIYL (570 aa)) lie on the Lumenal side of the membrane. 2 N-linked (GlcNAc...) asparagine glycosylation sites follow: Asn-75 and Asn-155. Residue Ser-169 is part of the active site. N-linked (GlcNAc...) asparagine glycosylation is found at Asn-230, Asn-362, Asn-397, Asn-432, Asn-444, and Asn-482. The chain crosses the membrane as a helical span at residues 596-616 (PVYIVANLLLAYGAQLHSILI). Over 617–672 (QGSCMDLDLSFDVAAKPYKVDPVLIICKYLLNYKWFKNYWDGLMLPQLDAVQLHAY) the chain is Cytoplasmic. Residues 673–693 (GFWFPLASLFFFIFGTSIAYW) form a helical membrane-spanning segment. The Lumenal segment spans residues 694-733 (SSIGLQAAVRILSSLWIYLKRPSMFPKESKCITYRVYAET). The helical transmembrane segment at 734–754 (LFFAFISWRSCGTFSLLLVFL) threads the bilayer. The Cytoplasmic portion of the chain corresponds to 755-821 (RYLSKVLILY…KALDDCLKMH (67 aa)). Residues 822–842 (FTILHLNLWIVLLGLPSFIYW) form a helical membrane-spanning segment. Residues 843 to 858 (LKTLRYTIQLDPDPNR) are Lumenal-facing. A helical transmembrane segment spans residues 859-879 (VSALVLIFILEILMNSTTSAI). The Cytoplasmic segment spans residues 880 to 887 (KSSVCLKT). Residues 888–908 (AAVLQLPLSIIVVAFGTLHLY) traverse the membrane as a helical segment. The Lumenal portion of the chain corresponds to 909-927 (RISNLIAFSLFLHVVCCFV).

It belongs to the GPI inositol-deacylase family.

It is found in the endoplasmic reticulum membrane. Functionally, GPI inositol-deacylase that catalyzes the remove of the acyl chain linked to the 2-OH position of inositol ring from the GPI-anchored protein (GPI-AP) in the endoplasmic reticulum. Initiates the post-attachment remodeling phase of GPI-AP biogenesis and participates in endoplasmic reticulum (ER)-to-Golgi transport of GPI-anchored protein. The protein is GPI inositol-deacylase of Xenopus laevis (African clawed frog).